Reading from the N-terminus, the 192-residue chain is UPF0312 protein Spro_1887 (192 aa).

Residues 1–23 form the signal peptide; sequence MLKKTVLGLTAGAMLLSAGSALA.

It belongs to the UPF0312 family. Type 1 subfamily.

It localises to the periplasm. The chain is UPF0312 protein Spro_1887 from Serratia proteamaculans (strain 568).